Reading from the N-terminus, the 461-residue chain is Protein transport protein HofB homolog (461 aa).

222–229 (GPTGSGKT) contributes to the ATP binding site.

It belongs to the GSP E family.

This is Protein transport protein HofB homolog (hofB) from Escherichia coli (strain K12).